A 150-amino-acid polypeptide reads, in one-letter code: Non-structural protein (150 aa).

Positions 93–140 (PLFRIRFLLLIMSDSISLTDITISPGTLYSARTLLLRAAVLALTRKPM) are apoptotic activity.

Disrupts the host mitochondrial membrane potential and induces apoptosis probably by inducing host CASP8 and CASP9. The protein is Non-structural protein of Bos taurus (Bovine).